The sequence spans 912 residues: Tiger protein E1 (912 aa).

The N-terminal stretch at 1-22 (MKLKHLTIFLFIFIYRFLFVKS) is a signal peptide. The Extracellular portion of the chain corresponds to 23–815 (DCYLINNERP…YSENKSSGFP (793 aa)). N-linked (GlcNAc...) asparagine glycans are attached at residues asparagine 54, asparagine 108, asparagine 164, asparagine 183, asparagine 232, asparagine 268, asparagine 323, asparagine 356, asparagine 398, asparagine 407, asparagine 568, asparagine 637, asparagine 653, asparagine 658, asparagine 706, asparagine 716, asparagine 763, asparagine 774, asparagine 781, and asparagine 809. IPT/TIG domains lie at 532 to 609 (SSDQ…GPFT) and 612 to 686 (PVIE…PLII). The region spanning 715 to 796 (TNTSDIDQTA…DGQYFIAQIF (82 aa)) is the IPT/TIG 3 domain. The helical transmembrane segment at 816–836 (NEMYIGIVAIIIFLALIFFAI) threads the bilayer. Topologically, residues 837-912 (KTQVEKYIEE…IRCCFKEHTD (76 aa)) are cytoplasmic.

It localises to the cell membrane. The sequence is that of Tiger protein E1 (tgrE1) from Dictyostelium discoideum (Social amoeba).